The chain runs to 194 residues: Xanthine phosphoribosyltransferase (194 aa).

Residues Leu-20 and Asn-27 each coordinate xanthine. Ala-128–Ala-132 serves as a coordination point for 5-phospho-alpha-D-ribose 1-diphosphate. Lys-156 is a binding site for xanthine.

The protein belongs to the purine/pyrimidine phosphoribosyltransferase family. Xpt subfamily. Homodimer.

Its subcellular location is the cytoplasm. The catalysed reaction is XMP + diphosphate = xanthine + 5-phospho-alpha-D-ribose 1-diphosphate. It participates in purine metabolism; XMP biosynthesis via salvage pathway; XMP from xanthine: step 1/1. Functionally, converts the preformed base xanthine, a product of nucleic acid breakdown, to xanthosine 5'-monophosphate (XMP), so it can be reused for RNA or DNA synthesis. The polypeptide is Xanthine phosphoribosyltransferase (Oceanobacillus iheyensis (strain DSM 14371 / CIP 107618 / JCM 11309 / KCTC 3954 / HTE831)).